The primary structure comprises 297 residues: uncharacterized protein (297 aa).

The tract at residues V175–K199 is disordered. Over residues L176–R185 the composition is skewed to polar residues. A glycan (N-linked (GlcNAc...) asparagine; by host) is linked at N269. A helical transmembrane segment spans residues L277–L297.

It belongs to the ascovirus HvAV ORF18 family.

Its subcellular location is the membrane. This is an uncharacterized protein from Noctuidae (owlet moths).